Consider the following 267-residue polypeptide: NLP effector protein 6 (267 aa).

An N-terminal signal peptide occupies residues methionine 1–alanine 35. Asparagine 114 carries an N-linked (GlcNAc...) asparagine glycan. A Conserved undecapeptide motif motif is present at residues alanine 117–arginine 127. Positions isoleucine 134–lysine 140 match the Conserved heptapeptide motif motif. The N-linked (GlcNAc...) asparagine glycan is linked to asparagine 192.

This sequence belongs to the Necrosis inducing protein (NPP1) family.

It localises to the secreted. In terms of biological role, probable secreted effector that may act as a pathogen-associated molecular pattern (PAMP) recognized by the plant immune system. This chain is NLP effector protein 6, found in Plasmopara viticola (Downy mildew of grapevine).